We begin with the raw amino-acid sequence, 151 residues long: Probable cGMP 3',5'-cyclic phosphodiesterase subunit delta (151 aa).

This sequence belongs to the PDE6D/unc-119 family. In terms of assembly, interacts with Pde6.

It is found in the nucleus. It localises to the cytoplasm. This is Probable cGMP 3',5'-cyclic phosphodiesterase subunit delta from Drosophila erecta (Fruit fly).